The sequence spans 291 residues: Ribonuclease Z (291 aa).

Zn(2+) is bound by residues His61, His63, Asp65, His66, His133, Asp201, and His257. Catalysis depends on Asp65, which acts as the Proton acceptor.

The protein belongs to the RNase Z family. Homodimer. Requires Zn(2+) as cofactor.

The catalysed reaction is Endonucleolytic cleavage of RNA, removing extra 3' nucleotides from tRNA precursor, generating 3' termini of tRNAs. A 3'-hydroxy group is left at the tRNA terminus and a 5'-phosphoryl group is left at the trailer molecule.. Zinc phosphodiesterase, which displays some tRNA 3'-processing endonuclease activity. Probably involved in tRNA maturation, by removing a 3'-trailer from precursor tRNA. The polypeptide is Ribonuclease Z (Saccharolobus islandicus (strain L.S.2.15 / Lassen #1) (Sulfolobus islandicus)).